The following is a 229-amino-acid chain: Methyltransferase ctvB (229 aa).

The protein belongs to the methyltransferase superfamily.

Its pathway is mycotoxin biosynthesis. In terms of biological role, methyltransferase; part of the gene cluster that mediates the biosynthesis of citreoviridin, an inhibitor of the of F1-ATPase beta-subunit. The HR-PKS ctvA accepts acetyl-CoA as the starter unit and catalyzes eight iterations of malonyl-CoA extension and four iterations of SAM-dependent methylation at C4, C12, C14, and C16. The KR and DH domains selectively act on the first six iterations to generate the hexaene chain. In the last three iterations, the KR and DH domains terminate their functions to yield a beta,delta-diketo ester moiety, which then undergoes intramolecular cyclization to yield an alpha-pyrone intermediate. Subsequently, ctvB methylates the alpha-pyrone hydroxyl group to generate citreomontanin. In order to form the tetrahydrofuran ring with the correct stereochemistry, the terminal alkenes of citreomontanin need to undergo isomerization to yield a (17Z)-hexaene, a step that could be catalyzed by ctvC. The (17Z)-hexaene then undergoes bisepoxidation by ctvC to form a (17R,16R,15S,14R)-bisepoxide moiety. Lastly, ctvD acts as a regioselective hydrolase to form the tetrahydrofuran ring with the substituents in the correct absolute configuration, completing the biosynthesis of citreoviridin. This Aspergillus terreus (strain NIH 2624 / FGSC A1156) protein is Methyltransferase ctvB.